Here is a 264-residue protein sequence, read N- to C-terminus: Thymidylate synthase (264 aa).

Residue arginine 21 coordinates dUMP. Histidine 51 is a binding site for (6R)-5,10-methylene-5,6,7,8-tetrahydrofolate. 126–127 (RR) contributes to the dUMP binding site. Cysteine 146 functions as the Nucleophile in the catalytic mechanism. DUMP contacts are provided by residues 166 to 169 (RSAD), asparagine 177, and 207 to 209 (HIY). Aspartate 169 provides a ligand contact to (6R)-5,10-methylene-5,6,7,8-tetrahydrofolate. A (6R)-5,10-methylene-5,6,7,8-tetrahydrofolate-binding site is contributed by alanine 263.

It belongs to the thymidylate synthase family. Bacterial-type ThyA subfamily. In terms of assembly, homodimer.

Its subcellular location is the cytoplasm. The enzyme catalyses dUMP + (6R)-5,10-methylene-5,6,7,8-tetrahydrofolate = 7,8-dihydrofolate + dTMP. It functions in the pathway pyrimidine metabolism; dTTP biosynthesis. Its function is as follows. Catalyzes the reductive methylation of 2'-deoxyuridine-5'-monophosphate (dUMP) to 2'-deoxythymidine-5'-monophosphate (dTMP) while utilizing 5,10-methylenetetrahydrofolate (mTHF) as the methyl donor and reductant in the reaction, yielding dihydrofolate (DHF) as a by-product. This enzymatic reaction provides an intracellular de novo source of dTMP, an essential precursor for DNA biosynthesis. In Vesicomyosocius okutanii subsp. Calyptogena okutanii (strain HA), this protein is Thymidylate synthase.